A 406-amino-acid polypeptide reads, in one-letter code: Protein transport protein HofC homolog (406 aa).

The next 3 membrane-spanning stretches (helical) occupy residues 167-187 (MVLGISLLLTLALLLFIVPQF), 214-234 (QNIGILLFFVLSFFLFYYFYL), and 379-399 (MMVIIGSLIGIIMMGMYLPIF).

Belongs to the GSP F family.

Its subcellular location is the cell inner membrane. This chain is Protein transport protein HofC homolog (hofC), found in Haemophilus influenzae (strain ATCC 51907 / DSM 11121 / KW20 / Rd).